Here is a 291-residue protein sequence, read N- to C-terminus: NADH-cytochrome b5 reductase 2 (291 aa).

Residues proline 7 to phenylalanine 23 traverse the membrane as a helical segment. In terms of domain architecture, FAD-binding FR-type spans aspartate 41 to glutamine 145. Leucine 148–leucine 183 serves as a coordination point for FAD.

Belongs to the flavoprotein pyridine nucleotide cytochrome reductase family. It depends on FAD as a cofactor.

It localises to the mitochondrion outer membrane. The enzyme catalyses 2 Fe(III)-[cytochrome b5] + NADH = 2 Fe(II)-[cytochrome b5] + NAD(+) + H(+). In terms of biological role, may mediate the reduction of outer membrane cytochrome b5. The protein is NADH-cytochrome b5 reductase 2 (MCR1) of Yarrowia lipolytica (strain CLIB 122 / E 150) (Yeast).